A 194-amino-acid polypeptide reads, in one-letter code: MKRERLMSINKEKAEAAIYQFLEAIGENPNREGLLDTPKRVAKMYAEMFLGLGKDPKEEFTAVFKEHHEDVVIVKDISFYSICEHHLVPFYGKAHIAYLPSDGRVTGLSKLARAVEVASKRPQLQERLTSQIADALVEALNPKGTLVMVEAEHMCMTMRGIKKPGSKTITTTARGLYKESRAERQEVISLMTKD.

Zn(2+) is bound by residues cysteine 83, histidine 86, and cysteine 155.

Belongs to the GTP cyclohydrolase I family. Toroid-shaped homodecamer, composed of two pentamers of five dimers.

It carries out the reaction GTP + H2O = 7,8-dihydroneopterin 3'-triphosphate + formate + H(+). Its pathway is cofactor biosynthesis; 7,8-dihydroneopterin triphosphate biosynthesis; 7,8-dihydroneopterin triphosphate from GTP: step 1/1. The polypeptide is GTP cyclohydrolase 1 (Streptococcus pyogenes serotype M5 (strain Manfredo)).